Reading from the N-terminus, the 128-residue chain is Large ribosomal subunit protein bL19 (128 aa).

The protein belongs to the bacterial ribosomal protein bL19 family.

In terms of biological role, this protein is located at the 30S-50S ribosomal subunit interface and may play a role in the structure and function of the aminoacyl-tRNA binding site. This is Large ribosomal subunit protein bL19 from Aromatoleum aromaticum (strain DSM 19018 / LMG 30748 / EbN1) (Azoarcus sp. (strain EbN1)).